The chain runs to 119 residues: MKVAVVLIVVLVVMMIGQETDSWRIRIRRGRKIFRKIRPYIPFVIGAVGKRQAGDAEFQAKYNAAAEDGVFTDEEIKSVFGVDDNGFVEFKATYDVDGDGVVQVEEYETVVELTENLAG.

The signal sequence occupies residues 1 to 22 (MKVAVVLIVVLVVMMIGQETDS). Positions 82–117 (VDDNGFVEFKATYDVDGDGVVQVEEYETVVELTENL) constitute an EF-hand domain. Residues Asp-95, Asp-97, Asp-99, and Glu-106 each coordinate Ca(2+).

As to expression, component of the acid-soluble organic matrix of calcified layers of the shell (at protein level).

It localises to the secreted. This is EF-hand calcium-binding domain-containing protein 2 from Lottia gigantea (Giant owl limpet).